The following is a 90-amino-acid chain: uncharacterized protein (90 aa).

This is an uncharacterized protein from Clostridium acetobutylicum (strain ATCC 824 / DSM 792 / JCM 1419 / IAM 19013 / LMG 5710 / NBRC 13948 / NRRL B-527 / VKM B-1787 / 2291 / W).